Here is a 1342-residue protein sequence, read N- to C-terminus: DNA-directed RNA polymerase subunit beta (1342 aa).

The protein belongs to the RNA polymerase beta chain family. In terms of assembly, the RNAP catalytic core consists of 2 alpha, 1 beta, 1 beta' and 1 omega subunit. When a sigma factor is associated with the core the holoenzyme is formed, which can initiate transcription.

It carries out the reaction RNA(n) + a ribonucleoside 5'-triphosphate = RNA(n+1) + diphosphate. DNA-dependent RNA polymerase catalyzes the transcription of DNA into RNA using the four ribonucleoside triphosphates as substrates. The chain is DNA-directed RNA polymerase subunit beta from Citrobacter koseri (strain ATCC BAA-895 / CDC 4225-83 / SGSC4696).